The chain runs to 642 residues: Threonine--tRNA ligase (642 aa).

The 61-residue stretch at 1–61 (MPVITLPDGS…ENDAQLSIIT (61 aa)) folds into the TGS domain. The tract at residues 243 to 534 (DHRKIGKQLD…LTEEFAGFFP (292 aa)) is catalytic. Lys-286 carries the post-translational modification N6-acetyllysine. Positions 334, 385, and 511 each coordinate Zn(2+).

The protein belongs to the class-II aminoacyl-tRNA synthetase family. In terms of assembly, homodimer. Requires Zn(2+) as cofactor.

The protein localises to the cytoplasm. The enzyme catalyses tRNA(Thr) + L-threonine + ATP = L-threonyl-tRNA(Thr) + AMP + diphosphate + H(+). Functionally, catalyzes the attachment of threonine to tRNA(Thr) in a two-step reaction: L-threonine is first activated by ATP to form Thr-AMP and then transferred to the acceptor end of tRNA(Thr). Also edits incorrectly charged L-seryl-tRNA(Thr). In Shigella boydii serotype 18 (strain CDC 3083-94 / BS512), this protein is Threonine--tRNA ligase.